Reading from the N-terminus, the 691-residue chain is DNA ligase (691 aa).

Residues 41 to 45 (DAEYD), 90 to 91 (SL), and glutamate 130 each bind NAD(+). The active-site N6-AMP-lysine intermediate is the lysine 132. Positions 153, 190, 307, and 331 each coordinate NAD(+). Zn(2+)-binding residues include cysteine 425, cysteine 428, cysteine 443, and cysteine 449. The region spanning 610–691 (APQGVLAGKT…LHQLLEGNTP (82 aa)) is the BRCT domain.

It belongs to the NAD-dependent DNA ligase family. LigA subfamily. Mg(2+) is required as a cofactor. The cofactor is Mn(2+).

The catalysed reaction is NAD(+) + (deoxyribonucleotide)n-3'-hydroxyl + 5'-phospho-(deoxyribonucleotide)m = (deoxyribonucleotide)n+m + AMP + beta-nicotinamide D-nucleotide.. Functionally, DNA ligase that catalyzes the formation of phosphodiester linkages between 5'-phosphoryl and 3'-hydroxyl groups in double-stranded DNA using NAD as a coenzyme and as the energy source for the reaction. It is essential for DNA replication and repair of damaged DNA. The sequence is that of DNA ligase from Burkholderia cenocepacia (strain ATCC BAA-245 / DSM 16553 / LMG 16656 / NCTC 13227 / J2315 / CF5610) (Burkholderia cepacia (strain J2315)).